The sequence spans 481 residues: Dihydrolipoyl dehydrogenase (481 aa).

FAD contacts are provided by residues 34–42 (EREHMGGIC) and Lys51. Residues Cys42 and Cys47 are joined by a disulfide bond. NAD(+) is bound by residues 195–199 (GSGAI), Glu218, and 284–287 (AVGV). 2 residues coordinate FAD: Asp326 and Ala334. The active-site Proton acceptor is His460.

Belongs to the class-I pyridine nucleotide-disulfide oxidoreductase family. In terms of assembly, homodimer. Requires FAD as cofactor.

The protein localises to the cytoplasm. It carries out the reaction N(6)-[(R)-dihydrolipoyl]-L-lysyl-[protein] + NAD(+) = N(6)-[(R)-lipoyl]-L-lysyl-[protein] + NADH + H(+). Lipoamide dehydrogenase is a component of the alpha-ketoacid dehydrogenase complexes. The polypeptide is Dihydrolipoyl dehydrogenase (lpdA) (Rhizobium etli (strain ATCC 51251 / DSM 11541 / JCM 21823 / NBRC 15573 / CFN 42)).